The chain runs to 407 residues: Na(+)-translocating NADH-quinone reductase subunit F (407 aa).

A helical membrane pass occupies residues 3 to 23 (IILGVVMFTLIVLALVLVILF). The 2Fe-2S ferredoxin-type domain occupies 32-126 (GDITISVNDD…DMDIELPEEI (95 aa)). Positions 69, 75, 78, and 110 each coordinate [2Fe-2S] cluster. An FAD-binding FR-type domain is found at 129 to 269 (VKKWECTVIS…SGPFGEFFAK (141 aa)). The tract at residues 272-389 (DAEMVFVGGG…PMMNAAVIGM (118 aa)) is catalytic.

Belongs to the NqrF family. In terms of assembly, composed of six subunits; NqrA, NqrB, NqrC, NqrD, NqrE and NqrF. The cofactor is [2Fe-2S] cluster. It depends on FAD as a cofactor.

The protein localises to the cell inner membrane. The catalysed reaction is a ubiquinone + n Na(+)(in) + NADH + H(+) = a ubiquinol + n Na(+)(out) + NAD(+). In terms of biological role, NQR complex catalyzes the reduction of ubiquinone-1 to ubiquinol by two successive reactions, coupled with the transport of Na(+) ions from the cytoplasm to the periplasm. The first step is catalyzed by NqrF, which accepts electrons from NADH and reduces ubiquinone-1 to ubisemiquinone by a one-electron transfer pathway. The polypeptide is Na(+)-translocating NADH-quinone reductase subunit F (Vibrio campbellii (strain ATCC BAA-1116)).